Consider the following 338-residue polypeptide: Nicotinate-nucleotide--dimethylbenzimidazole phosphoribosyltransferase (338 aa).

Glutamate 306 acts as the Proton acceptor in catalysis.

It belongs to the CobT family.

It catalyses the reaction 5,6-dimethylbenzimidazole + nicotinate beta-D-ribonucleotide = alpha-ribazole 5'-phosphate + nicotinate + H(+). Its pathway is nucleoside biosynthesis; alpha-ribazole biosynthesis; alpha-ribazole from 5,6-dimethylbenzimidazole: step 1/2. Functionally, catalyzes the synthesis of alpha-ribazole-5'-phosphate from nicotinate mononucleotide (NAMN) and 5,6-dimethylbenzimidazole (DMB). The chain is Nicotinate-nucleotide--dimethylbenzimidazole phosphoribosyltransferase from Cereibacter sphaeroides (strain ATCC 17025 / ATH 2.4.3) (Rhodobacter sphaeroides).